A 1037-amino-acid polypeptide reads, in one-letter code: Sentrin-specific protease 7 (1037 aa).

Over residues 1-10 (MDRARPGRRR) the composition is skewed to basic residues. Disordered stretches follow at residues 1 to 28 (MDRA…SPAD) and 182 to 420 (ASLS…SEEN). Serine 12, serine 13, serine 25, and serine 189 each carry phosphoserine. Polar residues-rich tracts occupy residues 182-211 (ASLS…NVNH) and 253-263 (TPQSKDFNSGN). A compositionally biased stretch (basic residues) spans 289–299 (VSRKRKKRGRS). Residues 300-309 (NFHNSHNPKS) are compositionally biased toward polar residues. Composition is skewed to basic and acidic residues over residues 310 to 320 (SVDKSTEYIKE) and 330 to 340 (KLEESNEDSHQ). The span at 381-399 (NKSSESSVSSEVAENSSAA) shows a compositional bias: low complexity. 2 positions are modified to phosphoserine: serine 432 and serine 433. Residues 747 to 1037 (LGVTNEDLEC…HLQQQKGSSS (291 aa)) are protease. Histidine 847 is an active-site residue. A disordered region spans residues 873 to 910 (EFQDQQSQHDNKTIDNDPHTTSTVFTSAEESQSTETSM). The span at 879–890 (SQHDNKTIDNDP) shows a compositional bias: basic and acidic residues. Residues 898–910 (TSAEESQSTETSM) are compositionally biased toward low complexity. Aspartate 926 is a catalytic residue. The Nucleophile role is filled by cysteine 979.

Belongs to the peptidase C48 family.

The protein resides in the cytoplasm. Protease that acts as a positive regulator of the cGAS-STING pathway by catalyzing desumoylation of CGAS. Desumoylation of CGAS promotes DNA-binding activity of CGAS, subsequent oligomerization and activation. Deconjugates SUMO2 and SUMO3 from targeted proteins, but not SUMO1. Catalyzes the deconjugation of poly-SUMO2 and poly-SUMO3 chains. Has very low efficiency in processing full-length SUMO proteins to their mature forms. The sequence is that of Sentrin-specific protease 7 (Senp7) from Rattus norvegicus (Rat).